We begin with the raw amino-acid sequence, 375 residues long: Chaperone protein DnaJ (375 aa).

The region spanning 5–70 is the J domain; that stretch reads DFYEVLGVER…SKRAAYDQYG (66 aa). Residues 134–212 form a CR-type zinc finger; sequence GTTVSIRVPT…CHGEGRVEEY (79 aa). Positions 147, 150, 164, 167, 186, 189, 200, and 203 each coordinate Zn(2+). 4 CXXCXGXG motif repeats span residues 147 to 154, 164 to 171, 186 to 193, and 200 to 207; these read CKPCDGSG, CPTCGGIG, CPRCHGQG, and CNSCHGEG.

It belongs to the DnaJ family. Homodimer. Requires Zn(2+) as cofactor.

Its subcellular location is the cytoplasm. Its function is as follows. Participates actively in the response to hyperosmotic and heat shock by preventing the aggregation of stress-denatured proteins and by disaggregating proteins, also in an autonomous, DnaK-independent fashion. Unfolded proteins bind initially to DnaJ; upon interaction with the DnaJ-bound protein, DnaK hydrolyzes its bound ATP, resulting in the formation of a stable complex. GrpE releases ADP from DnaK; ATP binding to DnaK triggers the release of the substrate protein, thus completing the reaction cycle. Several rounds of ATP-dependent interactions between DnaJ, DnaK and GrpE are required for fully efficient folding. Also involved, together with DnaK and GrpE, in the DNA replication of plasmids through activation of initiation proteins. This chain is Chaperone protein DnaJ, found in Pseudomonas entomophila (strain L48).